A 942-amino-acid chain; its full sequence is Serine/threonine-protein kinase ATG1 (942 aa).

Residues 11 to 312 (YVVEKEIGKG…FEEFFNNKIV (302 aa)) enclose the Protein kinase domain. ATP is bound by residues 17 to 25 (IGKGSFATV) and lysine 41. Catalysis depends on aspartate 159, which acts as the Proton acceptor. Residues 435-452 (NSSRVNKLDKSNLSGKSD) are compositionally biased toward polar residues. Disordered regions lie at residues 435 to 454 (NSSR…SDSS), 505 to 529 (QPHN…SRRA), and 817 to 836 (NSKP…NDSN). Residues 515 to 529 (RAPSTTSGGTSSRRA) show a composition bias toward low complexity. Positions 819–834 (KPGTHNQSPKSKISND) are enriched in polar residues.

The protein belongs to the protein kinase superfamily. Ser/Thr protein kinase family. APG1/unc-51/ULK1 subfamily. As to quaternary structure, homodimer. Forms a ternary complex with ATG13 and ATG17.

It is found in the cytoplasm. The protein resides in the preautophagosomal structure membrane. It catalyses the reaction L-seryl-[protein] + ATP = O-phospho-L-seryl-[protein] + ADP + H(+). The catalysed reaction is L-threonyl-[protein] + ATP = O-phospho-L-threonyl-[protein] + ADP + H(+). Its function is as follows. Serine/threonine protein kinase involved in the cytoplasm to vacuole transport (Cvt) and found to be essential in autophagy, where it is required for the formation of autophagosomes. Involved in the clearance of protein aggregates which cannot be efficiently cleared by the proteasome. Required for selective autophagic degradation of the nucleus (nucleophagy) as well as for mitophagy which contributes to regulate mitochondrial quantity and quality by eliminating the mitochondria to a basal level to fulfill cellular energy requirements and preventing excess ROS production. Also involved in endoplasmic reticulum-specific autophagic process, in selective removal of ER-associated degradation (ERAD) substrates. Plays a key role in ATG9 and ATG23 cycling through the pre-autophagosomal structure and is necessary to promote ATG18 binding to ATG9 through phosphorylation of ATG9. Catalyzes phosphorylation of ATG4, decreasing the interaction between ATG4 and ATG8 and impairing deconjugation of PE-conjugated forms of ATG8. Contributes to virulence by conferring resistance to unstable nutrient environments and immune defense of hosts. This is Serine/threonine-protein kinase ATG1 from Candida glabrata (strain ATCC 2001 / BCRC 20586 / JCM 3761 / NBRC 0622 / NRRL Y-65 / CBS 138) (Yeast).